The primary structure comprises 497 residues: Glycerol kinase (497 aa).

Position 13 (threonine 13) interacts with ADP. ATP is bound by residues threonine 13, threonine 14, and serine 15. Threonine 13 provides a ligand contact to sn-glycerol 3-phosphate. ADP is bound at residue arginine 17. The sn-glycerol 3-phosphate site is built by arginine 83, glutamate 84, and tyrosine 135. Glycerol is bound by residues arginine 83, glutamate 84, and tyrosine 135. Phosphohistidine; by HPr is present on histidine 231. Aspartate 245 serves as a coordination point for sn-glycerol 3-phosphate. Glycerol contacts are provided by aspartate 245 and glutamine 246. Threonine 267 and glycine 310 together coordinate ADP. ATP contacts are provided by threonine 267, glycine 310, glutamine 314, and glycine 411. Positions 411 and 415 each coordinate ADP.

This sequence belongs to the FGGY kinase family. In terms of assembly, homotetramer and homodimer (in equilibrium). In terms of processing, the phosphoenolpyruvate-dependent sugar phosphotransferase system (PTS), including enzyme I, and histidine-containing protein (HPr) are required for the phosphorylation, which leads to the activation of the enzyme.

It carries out the reaction glycerol + ATP = sn-glycerol 3-phosphate + ADP + H(+). The protein operates within polyol metabolism; glycerol degradation via glycerol kinase pathway; sn-glycerol 3-phosphate from glycerol: step 1/1. Its activity is regulated as follows. Activated by phosphorylation and inhibited by fructose 1,6-bisphosphate (FBP). In terms of biological role, key enzyme in the regulation of glycerol uptake and metabolism. Catalyzes the phosphorylation of glycerol to yield sn-glycerol 3-phosphate. The protein is Glycerol kinase of Listeria welshimeri serovar 6b (strain ATCC 35897 / DSM 20650 / CCUG 15529 / CIP 8149 / NCTC 11857 / SLCC 5334 / V8).